An 825-amino-acid polypeptide reads, in one-letter code: Outer dense fiber protein 2 (825 aa).

Phosphoserine is present on residues V22, K37, S68, and S69. A disordered region spans residues 27-46; the sequence is LPKPSAASSQKSHKRGMKGD. At T87 the chain carries Phosphothreonine. Residue S90 is modified to Phosphoserine; by TSSK4. A phosphoserine mark is found at S101 and S104. T105 bears the Phosphothreonine mark. Residues S110 and S124 each carry the phosphoserine modification. K133 participates in a covalent cross-link: Glycyl lysine isopeptide (Lys-Gly) (interchain with G-Cter in SUMO2). Position 134 is a phosphoserine (S134). Residues 139 to 212 are a coiled coil; the sequence is QKGERQMAKR…MSKLVEAEMD (74 aa). T226 bears the Phosphothreonine mark. Coiled coils occupy residues 240–418 and 456–793; these read DINT…AEQL and EIIV…NYVQ. A phosphoserine mark is found at S256 and S627. Positions 532-696 are interaction with BBOF1; it reads KNYEGMIDNY…EAIHQAQLRL (165 aa).

This sequence belongs to the ODF2 family. Self-associates. Associates with microtubules and forms a fibrillar structure partially linked to the microtubule network. Interacts through its C-terminus with PLK1. Interacts with ODF1. Interacts with MARK4; the interaction is required for localization of ODF2 to centrioles. Interacts with TSSK4. Interacts with AKNA. Interacts with QRICH2. Interacts with CFAP58. Interacts with BBOF1. Interacts with CCDC38. Interacts with CCDC42. Post-translationally, tyrosine phosphorylated. Phosphorylated on Ser-90 by TSSK4. In terms of tissue distribution, testis-specific. Expressed in the proximal compartment of the elongated spermatid tail; later expression progresses to the distal spermatid tail compartment located in the lumen of the seminiferous epithelium. In spermatids (stages II-III) expression of the tails peaks and remains strong during the remaining steps of spermiogenesis (at protein level). Expression correlates with the onset of spermatogenesis and is first detected at 30 days. Higher expression is seen in testis of 40-day-old and adults that are older than 50 days. No expression is seen in 10- and 20-day-old testes.

The protein localises to the cytoplasm. It is found in the cytoskeleton. The protein resides in the microtubule organizing center. Its subcellular location is the centrosome. It localises to the cell projection. The protein localises to the cilium. It is found in the centriole. The protein resides in the spindle pole. Its subcellular location is the flagellum. Functionally, seems to be a major component of sperm tail outer dense fibers (ODF). ODFs are filamentous structures located on the outside of the axoneme in the midpiece and principal piece of the mammalian sperm tail and may help to maintain the passive elastic structures and elastic recoil of the sperm tail. May have a modulating influence on sperm motility. Functions as a general scaffold protein that is specifically localized at the distal/subdistal appendages of mother centrioles. Component of the centrosome matrix required for the localization of PLK1 and NIN to the centrosomes. Required for the formation and/or maintenance of normal CETN1 assembly. The chain is Outer dense fiber protein 2 (Odf2) from Rattus norvegicus (Rat).